The following is a 203-amino-acid chain: FMN-dependent NADH:quinone oxidoreductase (203 aa).

FMN is bound by residues Ser-9, 15–17, and 138–141; these read SVS and SRGG.

This sequence belongs to the azoreductase type 1 family. As to quaternary structure, homodimer. FMN serves as cofactor.

It catalyses the reaction 2 a quinone + NADH + H(+) = 2 a 1,4-benzosemiquinone + NAD(+). The catalysed reaction is N,N-dimethyl-1,4-phenylenediamine + anthranilate + 2 NAD(+) = 2-(4-dimethylaminophenyl)diazenylbenzoate + 2 NADH + 2 H(+). Its function is as follows. Quinone reductase that provides resistance to thiol-specific stress caused by electrophilic quinones. Also exhibits azoreductase activity. Catalyzes the reductive cleavage of the azo bond in aromatic azo compounds to the corresponding amines. The sequence is that of FMN-dependent NADH:quinone oxidoreductase from Methylorubrum extorquens (strain CM4 / NCIMB 13688) (Methylobacterium extorquens).